Here is a 145-residue protein sequence, read N- to C-terminus: 3-hydroxyacyl-[acyl-carrier-protein] dehydratase FabZ (145 aa).

His47 is an active-site residue.

The protein belongs to the thioester dehydratase family. FabZ subfamily.

The protein resides in the cytoplasm. The catalysed reaction is a (3R)-hydroxyacyl-[ACP] = a (2E)-enoyl-[ACP] + H2O. In terms of biological role, involved in unsaturated fatty acids biosynthesis. Catalyzes the dehydration of short chain beta-hydroxyacyl-ACPs and long chain saturated and unsaturated beta-hydroxyacyl-ACPs. The protein is 3-hydroxyacyl-[acyl-carrier-protein] dehydratase FabZ of Polaromonas sp. (strain JS666 / ATCC BAA-500).